The primary structure comprises 846 residues: MASSHTPMMQQYLRIKTDYPDMLLFYRMGDFYELFFDDAKRASQLLDLTLTHRGQSADKPIPMAGVPYHAVENYLARLLKKGESVAICEQIGDPATSKGPVERQVTRIITPGTVTDEALLDARKDNILLAIHTQKQKIGIAWVDLGGGRFHLQELTEEHQLNAELVRLQPAELLCKESTPLPSFCSNFAVKFRPGWEFDASNAHKLLCEQFSVTDLSAFGEQNYPTALIAAGALLAYLKTTQKQSLPHLTTLTLEQSEDYLQLDASTQRHLELFENIHGGGEHCLLSILDKTACAMGSRLLKRWLGKPLKQHAIIQTRQQAIKEIIFLQQDVSLHQLIKQCADVERIVSRIALKSARPRDLVSLLQTLILLPAIHDELQENKTLLINEIKKEISPLPLLQQLLETAIIDNPPMLIRDGGVIAPGFDEELDELRNLSSNAHETLVKLEQEEKNRTGLSTLKLGYNSVQGFYIELSKAQAQNAPPHFHRKQTLKNVERYITPELKLFEDKVLSAQSKALAREKWLYDNLLEEIQQYIPELSDLAKSLAQLDVLVTLTERAQSLNWNCPNLVPESGIMIQAGRHPVIEPLLQERFIANDLELKPNQNMLLITGPNMGGKSTYMRQTALIVLLAHIGSFVPADEVRLGPLDRIFTRIGASDDLSSGRSTFMVEMTETAQILRQATSQSLVLIDEIGRGTSTYDGMALAYASCAFLASTIKAYTLFSTHYLELTELPKDFSCIRNVHLQASIKTGQIVFLYRVEEGCANRSYGLEVAELAGIPKEVLKLAHEHLNQIQDTQSILVQTQIIKPPTSPILTELKKIDPDRLTAKEALDLIYKLKQLECVESIN.

610 to 617 (GPNMGGKS) serves as a coordination point for ATP.

This sequence belongs to the DNA mismatch repair MutS family.

Functionally, this protein is involved in the repair of mismatches in DNA. It is possible that it carries out the mismatch recognition step. This protein has a weak ATPase activity. This is DNA mismatch repair protein MutS from Legionella pneumophila (strain Lens).